A 100-amino-acid polypeptide reads, in one-letter code: Small ribosomal subunit protein uS14c (100 aa).

The protein belongs to the universal ribosomal protein uS14 family. As to quaternary structure, part of the 30S ribosomal subunit.

The protein resides in the plastid. Its subcellular location is the cyanelle. Functionally, binds 16S rRNA, required for the assembly of 30S particles. This Cyanophora paradoxa protein is Small ribosomal subunit protein uS14c.